A 217-amino-acid polypeptide reads, in one-letter code: Small ribosomal subunit protein uS3c (217 aa).

The region spanning 46-117 (VQKHIKNSSN…RLRMTLIEIA (72 aa)) is the KH type-2 domain.

Belongs to the universal ribosomal protein uS3 family. Part of the 30S ribosomal subunit.

Its subcellular location is the plastid. The protein localises to the chloroplast. The sequence is that of Small ribosomal subunit protein uS3c (rps3) from Marchantia polymorpha (Common liverwort).